Reading from the N-terminus, the 311-residue chain is uncharacterized protein (311 aa).

A run of 10 helical transmembrane segments spans residues 6–26 (IFIL…KMLA), 33–53 (PFQV…PMAV), 70–90 (YLAL…QFAV), 97–117 (TAAV…YFIL), 123–143 (GITI…FNPA), 155–175 (LIGI…TVIS), 185–205 (YVFN…LLVV), 219–239 (ILVL…CYLG), 244–264 (TSAV…TVLA), and 265–285 (ILIL…FIII). 2 EamA domains span residues 12–141 (AIFY…IIFN) and 166–292 (VVWS…INYS).

This sequence belongs to the EamA transporter family.

The protein resides in the cell membrane. This is an uncharacterized protein from Clostridium kluyveri (strain ATCC 8527 / DSM 555 / NBRC 12016 / NCIMB 10680 / K1).